Reading from the N-terminus, the 106-residue chain is Ribonuclease P protein component 4 (106 aa).

C62, C65, C88, and C91 together coordinate Zn(2+).

Belongs to the eukaryotic/archaeal RNase P protein component 4 family. As to quaternary structure, consists of a catalytic RNA component and at least 4-5 protein subunits. Zn(2+) serves as cofactor.

It localises to the cytoplasm. It carries out the reaction Endonucleolytic cleavage of RNA, removing 5'-extranucleotides from tRNA precursor.. Functionally, part of ribonuclease P, a protein complex that generates mature tRNA molecules by cleaving their 5'-ends. The sequence is that of Ribonuclease P protein component 4 from Methanocorpusculum labreanum (strain ATCC 43576 / DSM 4855 / Z).